The following is a 240-amino-acid chain: Thiopurine S-methyltransferase (240 aa).

24 to 35 (WQDKWVTRHIAF) is an S-adenosyl-L-methionine binding site. Residue F35 coordinates substrate. An N6-acetyllysine modification is found at K53. S-adenosyl-L-methionine is bound by residues L64, E85, 129–130 (SI), and R147.

The protein belongs to the class I-like SAM-binding methyltransferase superfamily. TPMT family. As to quaternary structure, monomer.

The protein localises to the cytoplasm. The catalysed reaction is S-adenosyl-L-methionine + a thiopurine = S-adenosyl-L-homocysteine + a thiopurine S-methylether.. The enzyme catalyses mercaptopurine + S-adenosyl-L-methionine = 6-methylthiopurine + S-adenosyl-L-homocysteine + H(+). Its function is as follows. Catalyzes the S-methylation of thiopurine drugs such as 6-mercaptopurine (also called mercaptopurine, 6-MP or its brand name Purinethol) using S-adenosyl-L-methionine as the methyl donor. TPMT activity modulates the cytotoxic effects of thiopurine prodrugs. A natural substrate for this enzyme has yet to be identified. In Rattus norvegicus (Rat), this protein is Thiopurine S-methyltransferase (Tpmt).